A 230-amino-acid polypeptide reads, in one-letter code: Probable caffeoyl-CoA O-methyltransferase 1 (230 aa).

Residues threonine 52, aspartate 74, glycine 76 to valine 77, serine 82, aspartate 100, alanine 129, aspartate 151, aspartate 153, and tyrosine 160 each bind S-adenosyl-L-methionine. Residue aspartate 151 coordinates a divalent metal cation. A divalent metal cation is bound by residues aspartate 177 and asparagine 178.

The protein belongs to the class I-like SAM-binding methyltransferase superfamily. Cation-dependent O-methyltransferase family. CCoAMT subfamily.

It carries out the reaction (E)-caffeoyl-CoA + S-adenosyl-L-methionine = (E)-feruloyl-CoA + S-adenosyl-L-homocysteine + H(+). The sequence is that of Probable caffeoyl-CoA O-methyltransferase 1 (omt5) from Dictyostelium discoideum (Social amoeba).